Here is a 463-residue protein sequence, read N- to C-terminus: Cytoplasmic 60S subunit biogenesis factor SPCC550.15c (463 aa).

2 C2H2-type zinc fingers span residues 5–30 (FACT…DWHH) and 70–94 (QNCE…SKKH). Residues 109–136 (KLQSEDASSIASSTLSMGEPVVDSEIEE) are disordered. Over residues 113 to 124 (EDASSIASSTLS) the composition is skewed to polar residues. Residues serine 150 and serine 155 each carry the phosphoserine modification. The tract at residues 155-189 (SLHGRESEPSKTELATSIPQSNEASKSHLFTQEPT) is disordered. Positions 167–188 (ELATSIPQSNEASKSHLFTQEP) are enriched in polar residues. C2H2-type zinc fingers lie at residues 208-231 (RDCL…KASH) and 259-283 (FTCL…QKGH). Over residues 317 to 338 (TVVEEDGSSGEGDWEDVSDDSD) the composition is skewed to acidic residues. Disordered regions lie at residues 317–341 (TVVE…DNSS) and 444–463 (ANKM…ALLQ).

Belongs to the REI1 family. As to quaternary structure, associates with nascent pre-60S particles that have not yet entered the translating pool, and is released from mature 60S subunits.

Its subcellular location is the cytoplasm. Pre-60S-associated factor involved in the cytoplasmic maturation of the 60S subunit. Involved in the dissociation and recycling of other late pre-60S factors before newly synthesized large ribosomal subunits enter translation. The protein is Cytoplasmic 60S subunit biogenesis factor SPCC550.15c of Schizosaccharomyces pombe (strain 972 / ATCC 24843) (Fission yeast).